The primary structure comprises 347 residues: Mitochondrial carrier protein rim2 (347 aa).

3 Solcar repeats span residues 32 to 136 (PPPL…GKRI), 146 to 234 (ENSQ…FKHA), and 256 to 345 (LDWG…IMHF). The next 6 membrane-spanning stretches (helical) occupy residues 38 to 58 (FIAGGVAGMLGAIATAPLDVV), 105 to 125 (TRALFRGLGPNLIGTIPARSI), 152 to 172 (LMAAAIAGVITSAATNPIWLV), 214 to 233 (SLLGVGESTLQWVLYEKFKH), 262 to 282 (LGGAGIAKFMAAGIAYPHEVV), and 317 to 338 (LYGGLTAHLLRVVPNACILFGS).

The protein localises to the mitochondrion inner membrane. The enzyme catalyses 5-methyl-UTP(out) + UTP(in) = 5-methyl-UTP(in) + UTP(out). In terms of biological role, mitochondrial transporter that imports/exports pyrimidine nucleotides into and from mitochondria. Selectively transports uridine, thymidine, and cytosine (deoxy)nucleoside di- and triphosphates by an antiport mechanism. Also transports, with lower efficiency, uridine, thymidine, and cytosine (deoxy)nucleoside monophosphates as well as guanosine (deoxy)nucleoside di- and triphosphate. May import (deoxy)nucleoside triphosphates in exchange for intramitochondrial (deoxy)nucleoside monophosphates, thus providing precursors necessary for de novo synthesis of mitochondrial DNA and RNA while exporting products of their catabolism. Mediates the transport of iron and other divalent metal ions like copper and zinc across the mitochondrial inner membrane in a pyrimidine nucleotide-dependent fashion. Catalyzes the co-import of pyrimidine nucleotides and divalent metal ions including ferrous iron. Participates in mitochondrial genome maintenance, regulation of mitochondrial membrane potential and mitochondrial respiration. The chain is Mitochondrial carrier protein rim2 (rim2) from Schizosaccharomyces pombe (strain 972 / ATCC 24843) (Fission yeast).